We begin with the raw amino-acid sequence, 313 residues long: UDP-N-acetylenolpyruvoylglucosamine reductase (313 aa).

The FAD-binding PCMH-type domain occupies 31 to 207 (VGGPADALVA…TGVDLGLGFD (177 aa)). Residue Arg180 is part of the active site. The Proton donor role is filled by Cys236. Glu307 is a catalytic residue.

Belongs to the MurB family. FAD is required as a cofactor.

Its subcellular location is the cytoplasm. It catalyses the reaction UDP-N-acetyl-alpha-D-muramate + NADP(+) = UDP-N-acetyl-3-O-(1-carboxyvinyl)-alpha-D-glucosamine + NADPH + H(+). Its pathway is cell wall biogenesis; peptidoglycan biosynthesis. Cell wall formation. This Desulfosudis oleivorans (strain DSM 6200 / JCM 39069 / Hxd3) (Desulfococcus oleovorans) protein is UDP-N-acetylenolpyruvoylglucosamine reductase.